Here is a 212-residue protein sequence, read N- to C-terminus: Adenylate kinase (212 aa).

10–15 (GAGKGT) is a binding site for ATP. The tract at residues 30 to 59 (STGDMFRAAMANQTEMGRLAKSYIDKGELV) is NMP. AMP is bound by residues T31, R36, 57-59 (ELV), 86-89 (GYPR), and Q93. Residues 127 to 159 (GRIINRKTGETFHKVFNPPVDYKEEDYYQREDD) form an LID region. ATP is bound by residues R128 and 137–138 (TF). AMP is bound by residues R156 and R167. Q195 serves as a coordination point for ATP.

This sequence belongs to the adenylate kinase family. Monomer.

The protein resides in the cytoplasm. The catalysed reaction is AMP + ATP = 2 ADP. It participates in purine metabolism; AMP biosynthesis via salvage pathway; AMP from ADP: step 1/1. Catalyzes the reversible transfer of the terminal phosphate group between ATP and AMP. Plays an important role in cellular energy homeostasis and in adenine nucleotide metabolism. This is Adenylate kinase from Streptococcus agalactiae serotype Ia (strain ATCC 27591 / A909 / CDC SS700).